The primary structure comprises 366 residues: Phospho-N-acetylmuramoyl-pentapeptide-transferase (366 aa).

A run of 10 helical transmembrane segments spans residues 3–23, 55–75, 80–100, 118–138, 161–181, 197–217, 238–258, 262–282, 290–310, and 341–361; these read QIII…PILI, IAII…SYFA, FTAS…TGFA, AKLI…LRFP, IAFG…YVVV, LAAG…FWQF, IAVL…WNAA, IFMG…ISVV, VIIG…IAVF, and FWLI…GDWL.

The protein belongs to the glycosyltransferase 4 family. MraY subfamily. Mg(2+) is required as a cofactor.

The protein resides in the cell membrane. It catalyses the reaction UDP-N-acetyl-alpha-D-muramoyl-L-alanyl-gamma-D-glutamyl-meso-2,6-diaminopimeloyl-D-alanyl-D-alanine + di-trans,octa-cis-undecaprenyl phosphate = di-trans,octa-cis-undecaprenyl diphospho-N-acetyl-alpha-D-muramoyl-L-alanyl-D-glutamyl-meso-2,6-diaminopimeloyl-D-alanyl-D-alanine + UMP. Its pathway is cell wall biogenesis; peptidoglycan biosynthesis. Catalyzes the initial step of the lipid cycle reactions in the biosynthesis of the cell wall peptidoglycan: transfers peptidoglycan precursor phospho-MurNAc-pentapeptide from UDP-MurNAc-pentapeptide onto the lipid carrier undecaprenyl phosphate, yielding undecaprenyl-pyrophosphoryl-MurNAc-pentapeptide, known as lipid I. The sequence is that of Phospho-N-acetylmuramoyl-pentapeptide-transferase from Corynebacterium efficiens (strain DSM 44549 / YS-314 / AJ 12310 / JCM 11189 / NBRC 100395).